The chain runs to 328 residues: Probable cell division protein WhiA (328 aa).

A DNA-binding region (H-T-H motif) is located at residues 273–306 (SLEELGALADPPLTKDAVAGRIRRLLAMADKRAS).

It belongs to the WhiA family. As to quaternary structure, monomer in solution.

In terms of biological role, involved in cell division and chromosome segregation. Involved in sporulation. May coordinate the cessation of aerial hyphae growth and subsequent chromosome segregation and/or septation. Required for expression of the ParB partioning protein during sporogenesis. Activates its own transcription and represses WhiB. Binds with low affinity to its own promoter and to the Parp2 sporulation-specific promoter. Also binds directly to the RNA polymerase sigma factor WhiG, leading to inhibition of WhiG-dependent transcription in a dose-dependent manner. The protein is Probable cell division protein WhiA of Streptomyces coelicolor (strain ATCC BAA-471 / A3(2) / M145).